A 159-amino-acid chain; its full sequence is Phosphopantetheine adenylyltransferase (159 aa).

Position 10 (Thr-10) interacts with substrate. ATP is bound by residues 10 to 11 and His-18; that span reads TF. 3 residues coordinate substrate: Lys-42, Met-74, and Arg-88. ATP-binding positions include 89 to 91, Glu-99, and 124 to 130; these read GLR and WSFISSS.

This sequence belongs to the bacterial CoaD family. As to quaternary structure, homohexamer. Mg(2+) is required as a cofactor.

It localises to the cytoplasm. The enzyme catalyses (R)-4'-phosphopantetheine + ATP + H(+) = 3'-dephospho-CoA + diphosphate. Its pathway is cofactor biosynthesis; coenzyme A biosynthesis; CoA from (R)-pantothenate: step 4/5. Its function is as follows. Reversibly transfers an adenylyl group from ATP to 4'-phosphopantetheine, yielding dephospho-CoA (dPCoA) and pyrophosphate. The chain is Phosphopantetheine adenylyltransferase from Yersinia pestis.